A 558-amino-acid polypeptide reads, in one-letter code: Dihydroxy-acid dehydratase (558 aa).

Cysteine 50 is a binding site for [2Fe-2S] cluster. Aspartate 82 lines the Mg(2+) pocket. Cysteine 123 provides a ligand contact to [2Fe-2S] cluster. Mg(2+) contacts are provided by aspartate 124 and lysine 125. Lysine 125 is modified (N6-carboxylysine). Cysteine 195 contacts [2Fe-2S] cluster. Residue glutamate 447 coordinates Mg(2+). Serine 472 acts as the Proton acceptor in catalysis.

It belongs to the IlvD/Edd family. As to quaternary structure, homodimer. [2Fe-2S] cluster serves as cofactor. It depends on Mg(2+) as a cofactor.

The enzyme catalyses (2R)-2,3-dihydroxy-3-methylbutanoate = 3-methyl-2-oxobutanoate + H2O. It carries out the reaction (2R,3R)-2,3-dihydroxy-3-methylpentanoate = (S)-3-methyl-2-oxopentanoate + H2O. It participates in amino-acid biosynthesis; L-isoleucine biosynthesis; L-isoleucine from 2-oxobutanoate: step 3/4. It functions in the pathway amino-acid biosynthesis; L-valine biosynthesis; L-valine from pyruvate: step 3/4. Functionally, functions in the biosynthesis of branched-chain amino acids. Catalyzes the dehydration of (2R,3R)-2,3-dihydroxy-3-methylpentanoate (2,3-dihydroxy-3-methylvalerate) into 2-oxo-3-methylpentanoate (2-oxo-3-methylvalerate) and of (2R)-2,3-dihydroxy-3-methylbutanoate (2,3-dihydroxyisovalerate) into 2-oxo-3-methylbutanoate (2-oxoisovalerate), the penultimate precursor to L-isoleucine and L-valine, respectively. This Saccharolobus islandicus (strain M.16.27) (Sulfolobus islandicus) protein is Dihydroxy-acid dehydratase.